Here is a 449-residue protein sequence, read N- to C-terminus: MDCPNMPLHINRRQMLLSAATAAGALALGPARDAFGQARVQITEGNVAPLPIAIPNFVAGTPSDNEVGGGVAQVITNNLKRSGLFAPIDQAAYVEKITNIDVPPQFKSWTSINAQALVTGRMTRQSDGRLKAEFRLWDVATGQQLAGQQYFTSPEYWRRIAHIISDQIYERLTGEKGYFDSRVVFIDESGPADRRVKRLALMDQDGANVRYLTRGSDLVLTPRFSPSTQEITYMEFGQGDPKVYLFNIETGQREIVGNFPGMSFAPRFSPDGQRIIMSLQQGGNSNLFVMDLRSKSTTRLTDTPAIDTSPSYSPDAARICFESDRGGKPQIYVMPASGGQAQRISFGDGSYSTPVWSPRGDYIAFTKQGGGQFAIGIMKPDGSGERILTSGFHNEGPTFAPNGRVLMFFRDPGGNAGPSLFTVDVSGRNELRVPTPGYASDPAWSPLLS.

The first 36 residues, M1–G36, serve as a signal peptide directing secretion.

The protein belongs to the TolB family. The Tol-Pal system is composed of five core proteins: the inner membrane proteins TolA, TolQ and TolR, the periplasmic protein TolB and the outer membrane protein Pal. They form a network linking the inner and outer membranes and the peptidoglycan layer.

Its subcellular location is the periplasm. Functionally, part of the Tol-Pal system, which plays a role in outer membrane invagination during cell division and is important for maintaining outer membrane integrity. This chain is Tol-Pal system protein TolB, found in Rhodopseudomonas palustris (strain HaA2).